Reading from the N-terminus, the 225-residue chain is NAD(P)H-quinone oxidoreductase subunit K, chloroplastic (225 aa).

4 residues coordinate [4Fe-4S] cluster: cysteine 43, cysteine 44, cysteine 108, and cysteine 139.

This sequence belongs to the complex I 20 kDa subunit family. NDH is composed of at least 16 different subunits, 5 of which are encoded in the nucleus. The cofactor is [4Fe-4S] cluster.

The protein resides in the plastid. The protein localises to the chloroplast thylakoid membrane. It catalyses the reaction a plastoquinone + NADH + (n+1) H(+)(in) = a plastoquinol + NAD(+) + n H(+)(out). It carries out the reaction a plastoquinone + NADPH + (n+1) H(+)(in) = a plastoquinol + NADP(+) + n H(+)(out). Its function is as follows. NDH shuttles electrons from NAD(P)H:plastoquinone, via FMN and iron-sulfur (Fe-S) centers, to quinones in the photosynthetic chain and possibly in a chloroplast respiratory chain. The immediate electron acceptor for the enzyme in this species is believed to be plastoquinone. Couples the redox reaction to proton translocation, and thus conserves the redox energy in a proton gradient. This chain is NAD(P)H-quinone oxidoreductase subunit K, chloroplastic, found in Dioscorea elephantipes (Elephant's foot yam).